The following is a 187-amino-acid chain: Peptide deformylase 1 (187 aa).

Fe cation-binding residues include C107 and H149. Residue E150 is part of the active site. A Fe cation-binding site is contributed by H153.

The protein belongs to the polypeptide deformylase family. Fe(2+) is required as a cofactor.

The enzyme catalyses N-terminal N-formyl-L-methionyl-[peptide] + H2O = N-terminal L-methionyl-[peptide] + formate. Functionally, removes the formyl group from the N-terminal Met of newly synthesized proteins. Requires at least a dipeptide for an efficient rate of reaction. N-terminal L-methionine is a prerequisite for activity but the enzyme has broad specificity at other positions. In Nostoc sp. (strain PCC 7120 / SAG 25.82 / UTEX 2576), this protein is Peptide deformylase 1.